A 491-amino-acid polypeptide reads, in one-letter code: Rab5 GDP/GTP exchange factor (491 aa).

The tract at residues methionine 1–serine 74 is interaction with ubiquitinated proteins. The A20-type zinc finger occupies aspartate 13–arginine 47. 4 residues coordinate Zn(2+): cysteine 19, cysteine 23, cysteine 35, and cysteine 38. Positions glutamate 66 to lysine 85 are disordered. The segment covering phenylalanine 69–serine 84 has biased composition (low complexity). 2 positions are modified to phosphoserine: serine 124 and serine 132. N6-acetyllysine is present on residues lysine 151 and lysine 170. The region spanning glutamate 232–asparagine 375 is the VPS9 domain. Phosphoserine occurs at positions 373, 377, and 390. Positions valine 407 to glutamate 448 form a coiled coil. The interval proline 462 to glycine 491 is disordered.

Heterodimer with RABEP1. The heterodimer binds RAB4A and RAB5A that have been activated by GTP-binding. Binds TSC2, GGA1, GGA2, GGA3, AP1G1 and AP1G2. Interacts with RAB21, and with 100-fold lower affinity also with RAB22. Interacts with ubiquitinated EGFR. Interacts with RGS14; the interaction is GTP-dependent. Monoubiquitinated. In terms of tissue distribution, expressed in the white matter tracts of the cerebellum, the fimbria hippocampi and the corpus callosum.

The protein localises to the cytoplasm. Its subcellular location is the early endosome. It localises to the recycling endosome. In terms of biological role, rab effector protein acting as linker between gamma-adaptin, RAB4A or RAB5A. Involved in endocytic membrane fusion and membrane trafficking of recycling endosomes. Stimulates nucleotide exchange on RAB5A. Can act as a ubiquitin ligase. The chain is Rab5 GDP/GTP exchange factor (Rabgef1) from Mus musculus (Mouse).